Here is a 349-residue protein sequence, read N- to C-terminus: Methylthioribose-1-phosphate isomerase (349 aa).

Substrate-binding positions include Arg-51 to Ala-53, Arg-94, and Gln-199. Asp-240 (proton donor) is an active-site residue. Residue Asn-250–Lys-251 coordinates substrate.

The protein belongs to the EIF-2B alpha/beta/delta subunits family. MtnA subfamily. In terms of assembly, homodimer.

The enzyme catalyses 5-(methylsulfanyl)-alpha-D-ribose 1-phosphate = 5-(methylsulfanyl)-D-ribulose 1-phosphate. The protein operates within amino-acid biosynthesis; L-methionine biosynthesis via salvage pathway; L-methionine from S-methyl-5-thio-alpha-D-ribose 1-phosphate: step 1/6. In terms of biological role, catalyzes the interconversion of methylthioribose-1-phosphate (MTR-1-P) into methylthioribulose-1-phosphate (MTRu-1-P). This chain is Methylthioribose-1-phosphate isomerase, found in Bacillus mycoides (strain KBAB4) (Bacillus weihenstephanensis).